A 129-amino-acid polypeptide reads, in one-letter code: Small ribosomal subunit protein uS11 (129 aa).

It belongs to the universal ribosomal protein uS11 family. As to quaternary structure, part of the 30S ribosomal subunit. Interacts with proteins S7 and S18. Binds to IF-3.

Functionally, located on the platform of the 30S subunit, it bridges several disparate RNA helices of the 16S rRNA. Forms part of the Shine-Dalgarno cleft in the 70S ribosome. The sequence is that of Small ribosomal subunit protein uS11 from Xanthobacter autotrophicus (strain ATCC BAA-1158 / Py2).